Consider the following 185-residue polypeptide: Signal peptidase I (185 aa).

The Cytoplasmic portion of the chain corresponds to 1 to 20; it reads MKSEKEKTSKKSAVLDWAKA. The chain crosses the membrane as a helical span at residues 21-41; it reads IIIAVVLAVLIRNFLFAPYVV. The Extracellular segment spans residues 42-185; the sequence is DGESMEPTLH…FPFNEIRKTK (144 aa). Active-site residues include S45 and K85.

Belongs to the peptidase S26 family.

It localises to the cell membrane. The enzyme catalyses Cleavage of hydrophobic, N-terminal signal or leader sequences from secreted and periplasmic proteins.. In Bacillus amyloliquefaciens (Bacillus velezensis), this protein is Signal peptidase I (sipA).